The sequence spans 292 residues: MSEIRLYVSTTESQAEQILDLLTEVFGEEDFAIGTTEVDEKRDIWEASVYMMAEDEAQVRSRVETALKSAFPDAQLLREVIPDVDWVVKSLEGLKPVRAGRFLVHGSHDREKVRPGDIAIEIDAGQAFGTGHHGTTAGCLEVIDRVVRSRRVRNALDLGTGSGVLAIAVRKLKNMPVLATDIDPIATRVAAENVRRNGIASGIVTRTAPGFHSTAFSEHGPFDLIIANILARPLIRMAPQLAAHLAPGGSVILSGILAAQRWKVIAAYSGARLRHVRTIWRNGWVTIHFDRP.

S-adenosyl-L-methionine-binding residues include threonine 136, glycine 159, aspartate 181, and asparagine 228.

Belongs to the methyltransferase superfamily. PrmA family.

It is found in the cytoplasm. The enzyme catalyses L-lysyl-[protein] + 3 S-adenosyl-L-methionine = N(6),N(6),N(6)-trimethyl-L-lysyl-[protein] + 3 S-adenosyl-L-homocysteine + 3 H(+). Functionally, methylates ribosomal protein L11. The chain is Ribosomal protein L11 methyltransferase from Rhizobium etli (strain ATCC 51251 / DSM 11541 / JCM 21823 / NBRC 15573 / CFN 42).